The chain runs to 233 residues: Orotidine 5'-phosphate decarboxylase (233 aa).

Residues Asp9, Lys31, 58-67, Thr120, Arg182, Gln191, Gly211, and Arg212 contribute to the substrate site; that span reads DLKLHDIPNT. The Proton donor role is filled by Lys60.

This sequence belongs to the OMP decarboxylase family. Type 1 subfamily. In terms of assembly, homodimer.

It catalyses the reaction orotidine 5'-phosphate + H(+) = UMP + CO2. It participates in pyrimidine metabolism; UMP biosynthesis via de novo pathway; UMP from orotate: step 2/2. Its function is as follows. Catalyzes the decarboxylation of orotidine 5'-monophosphate (OMP) to uridine 5'-monophosphate (UMP). The polypeptide is Orotidine 5'-phosphate decarboxylase (Listeria innocua serovar 6a (strain ATCC BAA-680 / CLIP 11262)).